The chain runs to 113 residues: Hydrogenase maturation factor HybF (113 aa).

2 residues coordinate Ni(2+): H2 and E3. Zn(2+) is bound by residues C73, C76, C89, and C92.

It belongs to the HypA/HybF family. HybF subfamily.

Involved in the maturation of [NiFe] hydrogenases. Required for nickel insertion into the metal center of the hydrogenase. The chain is Hydrogenase maturation factor HybF from Morganella morganii (Proteus morganii).